The sequence spans 369 residues: Mycofactocin maturase MftC (369 aa).

Residues 16–232 (LDAPICLTWE…KGERVLTGDS (217 aa)) enclose the Radical SAM core domain. Residues Cys-30, Cys-34, Cys-37, Cys-251, Cys-258, Cys-269, Cys-310, Cys-313, Cys-319, Cys-323, and Cys-341 each contribute to the [4Fe-4S] cluster site. Residues 347 to 369 (APALAQERHAPRPRVDHSRGSRE) are disordered. Residues 352-369 (QERHAPRPRVDHSRGSRE) are compositionally biased toward basic and acidic residues.

Belongs to the radical SAM superfamily. MftC family. As to quaternary structure, interacts with MftB. It depends on [4Fe-4S] cluster as a cofactor.

The enzyme catalyses [mycofactocin precursor peptide]-C-terminal glycyl-L-valyl-L-tyrosine + S-adenosyl-L-methionine = [mycofactocin precursor peptide]-C-terminal glycyl-N-{[2-(4-hydroxyphenyl)ethenyl]-3-methylbutanamide} + 5'-deoxyadenosine + L-methionine + CO2. It catalyses the reaction [mycofactocin precursor peptide]-C-terminal glycyl-N-{[2-(4-hydroxyphenyl)ethenyl]-3-methylbutanamide} + AH2 + S-adenosyl-L-methionine = [mycofactocin precursor peptide]-C-terminal glycyl-N-{5-[(4-hydroxyphenyl)methyl]-4,4-dimethyl-2-oxopyrrolidin-3-yl}acetamide + 5'-deoxyadenosine + L-methionine + A + H(+). In terms of biological role, radical S-adenosylmethionine (SAM) enzyme responsible for the first step of the biosynthesis of the enzyme cofactor mycofactocin (MFT). Catalyzes two reactions at the C-terminus of the mycofactocin precursor (the MftA peptide). The first one is the oxidative decarboxylation of the C-terminal L-tyrosine of MftA, forming an unsaturated tyramine moiety. The second reaction is the cross-linking of the tyramine with the penultimate L-valine residue, forming a five-membered lactam ring. Its activity requires the presence of the MftB chaperone. The protein is Mycofactocin maturase MftC of Mycobacterium ulcerans (strain Agy99).